The chain runs to 312 residues: Ribonuclease Z (312 aa).

Residues histidine 62, histidine 64, aspartate 66, histidine 67, histidine 144, aspartate 215, and histidine 273 each contribute to the Zn(2+) site. Catalysis depends on aspartate 66, which acts as the Proton acceptor.

The protein belongs to the RNase Z family. In terms of assembly, homodimer. Zn(2+) serves as cofactor.

The enzyme catalyses Endonucleolytic cleavage of RNA, removing extra 3' nucleotides from tRNA precursor, generating 3' termini of tRNAs. A 3'-hydroxy group is left at the tRNA terminus and a 5'-phosphoryl group is left at the trailer molecule.. Its function is as follows. Zinc phosphodiesterase, which displays some tRNA 3'-processing endonuclease activity. Probably involved in tRNA maturation, by removing a 3'-trailer from precursor tRNA. This chain is Ribonuclease Z, found in Prochlorococcus marinus (strain MIT 9215).